Here is a 337-residue protein sequence, read N- to C-terminus: DNA-directed RNA polymerase subunit alpha (337 aa).

The segment at 1–232 (MVREEVRVCT…IDLFIPFLHA (232 aa)) is alpha N-terminal domain (alpha-NTD). The interval 266–337 (EISFQCIFID…FAIDLPKNKF (72 aa)) is alpha C-terminal domain (alpha-CTD).

It belongs to the RNA polymerase alpha chain family. As to quaternary structure, in plastids the minimal PEP RNA polymerase catalytic core is composed of four subunits: alpha, beta, beta', and beta''. When a (nuclear-encoded) sigma factor is associated with the core the holoenzyme is formed, which can initiate transcription.

The protein localises to the plastid. Its subcellular location is the chloroplast. It catalyses the reaction RNA(n) + a ribonucleoside 5'-triphosphate = RNA(n+1) + diphosphate. Its function is as follows. DNA-dependent RNA polymerase catalyzes the transcription of DNA into RNA using the four ribonucleoside triphosphates as substrates. The chain is DNA-directed RNA polymerase subunit alpha from Buxus microphylla (Littleleaf boxwood).